The primary structure comprises 239 residues: Probable transcriptional regulatory protein BCQ_0605 (239 aa).

It belongs to the TACO1 family. YeeN subfamily.

It is found in the cytoplasm. This Bacillus cereus (strain Q1) protein is Probable transcriptional regulatory protein BCQ_0605.